Consider the following 405-residue polypeptide: Neisseria adhesin A (405 aa).

Residues 1 to 23 (MKHFPSKVLTTAILATFCSGALA) form the signal peptide. Residues 24-87 (ATNDDDVKKA…ADDFKGLGLK (64 aa)) are head domain. Coiled-coil stretches lie at residues 87-170 (KKVV…KLEA) and 181-329 (AFND…LRKE). Residues 88-350 (KVVTNLTKTV…SGLFQPYNVG (263 aa)) are coiled stalk domain. The segment at 312–350 (HDTRLNGLDKTVSDLRKETRQGLAEQAALSGLFQPYNVG) is outer membrane translocation of the passenger domain. A run of 4 beta stranded transmembrane segments spans residues 350–360 (GRFNVTAAVGG), 364–375 (ESAVAIGTGFRF), 382–388 (KAGVAVG), and 394–405 (SAAYHVGVNYEW). The tract at residues 351-405 (RFNVTAAVGGYKSESAVAIGTGFRFTENFAAKAGVAVGTSSGSSAAYHVGVNYEW) is translocator domain.

This sequence belongs to the autotransporter-2 (AT-2) (TC 1.B.40) family. In terms of assembly, the non-membrane anchored protein (residues 24-350) probably forms a homotrimer; it is assumed the mature protein forms trimers in situ. The mature protein without the membrane-targeting segment (residues 24-350) binds to human heat shock 90 beta protein (HSP90AB1) both in vitro and when incubated with human monocytes. A subsequent paper showed binding of the same fragment in epithelial cells to both HSP90AA1 and HSP90AB1; in vitro the interaction is stabilized by ADP and the Hsp90 inhibitor 17-AAG (17-N-allylamino-17-demethoxygeldanamycin), in vitro and in vivo both interactions are inhibited by ATP. Binds human oxidized low-density lipoprotein receptor 1 (LOX-1, OLR1) in protein microarrays, in solution and when LOX-1 is expressed on the cell surface. Binds via the head and the beginning of the coiled stalk (residues 24-170); binding can be abrogated by monoclonal antibodies against those specific regions of NadA. Other potential binding partners were identified but not characterized in the same study. Forms high molecular weight oligomers in whole cell extracts that are not disrupted by boiling in SDS buffer.

The protein resides in the cell outer membrane. It is found in the cell surface. In terms of biological role, adheres to and induces bacterial uptake by human epithelial cells in a microfilament-dependent process. Binding is reduced by pronase treatment, suggesting there is a protein receptor on the human cells. Possible human protein receptors include integrin beta-1 (ITGB1) and oxidized low-density lipoprotein receptor 1 (OLR1). Binds to extracellular human Hsp90 (preferentially the beta isoform, HSP90AB1) on monocytes, binding stimulates monocytes in a TLR4-dependent fashion, polymixin B, which binds NadA, blocks the activation. Hsp90 is probably not the first receptor on human monocytes. Non-membrane anchored protein (residues 24-350) is internalized into human epithelial cells by hijacking the endosome recycling pathway and may be recycled back to the cell surface, which might aid transcellular trafficking of the bacteria. A bacterial cell surface protein; antisera against this protein induce complement-mediated killing of this and other strains. The sequence is that of Neisseria adhesin A from Neisseria meningitidis serogroup B.